Consider the following 197-residue polypeptide: MATSSLSTIVFSPLALSNSSSFPNKPQVSNLSLHSSLSNLRRTLSHSSPSSSSSSNVRVFAAPEVLESQETGPESYVEEGSETSALGIGADSDQMAPKQKIRIKLRSYWVPLIEDSCKQIMDAARTTNAKTMGPVPLPTKKRIFCVLKSPHVHKDARFHFEIRTHQRLIDILYPTAQTIDSLMQLDLPAGVDVEVKL.

Residues 1-60 (MATSSLSTIVFSPLALSNSSSFPNKPQVSNLSLHSSLSNLRRTLSHSSPSSSSSSNVRVF) constitute a chloroplast transit peptide. The segment at 67–91 (ESQETGPESYVEEGSETSALGIGAD) is disordered.

Belongs to the universal ribosomal protein uS10 family. As to quaternary structure, part of the 30S ribosomal subunit.

Its subcellular location is the plastid. It is found in the chloroplast. The protein is Small ribosomal subunit protein uS10c (RPS10) of Mesembryanthemum crystallinum (Common ice plant).